The sequence spans 447 residues: Protein O-GlcNAcase (447 aa).

A GH84 domain is found at 1–277 (MLTGVIEGFY…TTGAYLADPD (277 aa)). 3 residues coordinate a protein: Gly8, Lys39, and Asp115. Asp116 (proton donor) is an active-site residue. A protein is bound by residues Tyr160, 219–221 (WDN), Asp226, and Asn254.

Belongs to the glycosyl hydrolase 84 family.

It catalyses the reaction 3-O-(N-acetyl-beta-D-glucosaminyl)-L-seryl-[protein] + H2O = N-acetyl-D-glucosamine + L-seryl-[protein]. The enzyme catalyses 3-O-(N-acetyl-beta-D-glucosaminyl)-L-threonyl-[protein] + H2O = L-threonyl-[protein] + N-acetyl-D-glucosamine. With respect to regulation, inhibited by PUGNac (O-(2-acetamido-2-deoxy-D-glucopyranosylidene)amino-N-phenylcarbamate). In terms of biological role, cleaves GlcNAc from O-glycosylated proteins. Can use p-nitrophenyl-beta-GlcNAc and 4-methylumbelliferone-GlcNAc as substrate (in vitro). This Oceanicola granulosus (strain ATCC BAA-861 / DSM 15982 / KCTC 12143 / HTCC2516) protein is Protein O-GlcNAcase.